The primary structure comprises 1103 residues: Voltage-dependent calcium channel subunit alpha-2/delta-1 (1103 aa).

A signal peptide spans 1 to 24; sequence MAAGCLLALTLTLFQSGLIGPSSE. Residues 25 to 1073 are Extracellular-facing; sequence EPFPSPVTIK…VLEDYTDCGG (1049 aa). N-linked (GlcNAc...) asparagine glycosylation occurs at Asn-92. Ser-119 carries the post-translational modification Phosphoserine. Residues Asn-136 and Asn-184 are each glycosylated (N-linked (GlcNAc...) asparagine). The VWFA domain maps to 253-430; that stretch reads DMLILVDVSG…INTQEYLDVL (178 aa). The a divalent metal cation site is built by Asp-259, Ser-261, and Ser-263. An MIDAS-like motif motif is present at residues 259–263; the sequence is DVSGS. N-linked (GlcNAc...) asparagine glycosylation is found at Asn-324 and Asn-348. A disulfide bridge connects residues Cys-404 and Cys-1059. Residues 446–537 form the Cache domain; it reads WTNVYLDALE…QPKPIGVGIP (92 aa). Residues Asn-613, Asn-781, and Asn-888 are each glycosylated (N-linked (GlcNAc...) asparagine). A helical transmembrane segment spans residues 1074-1094; it reads VSGLNPSLWSIFGLQFILLWL. Residues 1095–1103 are Cytoplasmic-facing; the sequence is VSGSRHYLL.

Belongs to the calcium channel subunit alpha-2/delta family. As to quaternary structure, dimer formed of alpha-2-1 and delta-1 chains; disulfide-linked. Voltage-dependent calcium channels are multisubunit complexes, consisting of alpha-1 (CACNA1), alpha-2 (CACNA2D), beta (CACNB) and delta (CACNA2D) subunits in a 1:1:1:1 ratio. Proteolytically processed into subunits alpha-2-1 and delta-1 that are disulfide-linked. As to expression, isoform 2A is expressed in skeletal muscle and aorta. Isoform 2B is expressed in brain. Isoform 2C is expressed in heart. Isoform 2D is expressed in heart and smooth muscle. Isoform 2E is expressed in smooth muscle. All five isoforms are expressed in the cardiovascular system.

The protein localises to the membrane. Its subcellular location is the cell membrane. In terms of biological role, the alpha-2/delta subunit of voltage-dependent calcium channels regulates calcium current density and activation/inactivation kinetics of the calcium channel. Plays an important role in excitation-contraction coupling. The protein is Voltage-dependent calcium channel subunit alpha-2/delta-1 (Cacna2d1) of Mus musculus (Mouse).